Here is a 184-residue protein sequence, read N- to C-terminus: MIFASSNRHKYEEFRRMLSDLIDLKFLEVDYLEPQGEDTREIVVTSAKWLSNYIREPFFIEDSGLFIEALNGFPGPYSSYVFKKIGNEGVLKLMNGVENRRAFFISVIALSYGRGIEVFEGRVQGTIAREVRGGGWGFDPIFIPNGSNKTYGELGDEKDRFSHRGASCRKLREFLMRFGSDRLP.

Position 5 to 10 (5 to 10 (SSNRHK)) interacts with substrate. Mg(2+) is bound by residues E33 and D62. D62 functions as the Proton acceptor in the catalytic mechanism. Residues S63, 136–139 (WGFD), K158, and 163–164 (HR) each bind substrate.

The protein belongs to the HAM1 NTPase family. As to quaternary structure, homodimer. Requires Mg(2+) as cofactor.

The catalysed reaction is XTP + H2O = XMP + diphosphate + H(+). It carries out the reaction dITP + H2O = dIMP + diphosphate + H(+). It catalyses the reaction ITP + H2O = IMP + diphosphate + H(+). In terms of biological role, pyrophosphatase that catalyzes the hydrolysis of nucleoside triphosphates to their monophosphate derivatives, with a high preference for the non-canonical purine nucleotides XTP (xanthosine triphosphate), dITP (deoxyinosine triphosphate) and ITP. Seems to function as a house-cleaning enzyme that removes non-canonical purine nucleotides from the nucleotide pool, thus preventing their incorporation into DNA/RNA and avoiding chromosomal lesions. The chain is dITP/XTP pyrophosphatase from Korarchaeum cryptofilum (strain OPF8).